Consider the following 110-residue polypeptide: Large ribosomal subunit protein uL24 (110 aa).

This sequence belongs to the universal ribosomal protein uL24 family. In terms of assembly, part of the 50S ribosomal subunit.

In terms of biological role, one of two assembly initiator proteins, it binds directly to the 5'-end of the 23S rRNA, where it nucleates assembly of the 50S subunit. One of the proteins that surrounds the polypeptide exit tunnel on the outside of the subunit. This Desulfovibrio desulfuricans (strain ATCC 27774 / DSM 6949 / MB) protein is Large ribosomal subunit protein uL24.